Here is a 116-residue protein sequence, read N- to C-terminus: MDKKTSRLRRATRARKKIQELGVNRLVVHRTPRHTYAQVISPDSQVLAAASTAEKAVTEQLKYTGNVDAAKAVGKTVAERAIEKGVTVVAFDRSGFKYHGRVAALADAAREAGLKF.

The protein belongs to the universal ribosomal protein uL18 family. Part of the 50S ribosomal subunit; part of the 5S rRNA/L5/L18/L25 subcomplex. Contacts the 5S and 23S rRNAs.

In terms of biological role, this is one of the proteins that bind and probably mediate the attachment of the 5S RNA into the large ribosomal subunit, where it forms part of the central protuberance. The protein is Large ribosomal subunit protein uL18 of Shewanella sediminis (strain HAW-EB3).